Here is a 785-residue protein sequence, read N- to C-terminus: Transcription factor Sp1 (785 aa).

A disordered region spans residues 1-93 (MSDQDHSMDE…PSQSGGTGEL (93 aa)). At S2 the chain carries N-acetylserine. Phosphoserine is present on residues S2 and S7. The segment at 2-82 (SDQDHSMDEM…SPNENSNNSQ (81 aa)) is repressor domain. K16 participates in a covalent cross-link: Glycyl lysine isopeptide (Lys-Gly) (interchain with G-Cter in SUMO); alternate. K16 is covalently cross-linked (Glycyl lysine isopeptide (Lys-Gly) (interchain with G-Cter in SUMO2); alternate). The segment covering 20 to 34 (GVGGNNGGNGNGGGA) has biased composition (gly residues). Position 59 is a phosphoserine (S59). The segment covering 72–85 (ESPNENSNNSQGPS) has biased composition (low complexity). Residue S101 is modified to Phosphoserine; by ATM. Over residues 109–123 (IISSSSGATPTSKEQ) the composition is skewed to polar residues. Residues 109–141 (IISSSSGATPTSKEQSGSSTNGSNGSESSKNRT) form a disordered region. The segment covering 124 to 136 (SGSSTNGSNGSES) has biased composition (low complexity). Positions 146-251 (QYVVAAAPNL…ANNVLSGQTQ (106 aa)) are transactivation domain A (Gln-rich). A transactivation domain B (Gln-rich) region spans residues 261 to 495 (NGNITLLPVN…PMQGVSLGQT (235 aa)). A Phosphothreonine; by MAPK8 modification is found at T278. The segment at 329–395 (TTTTTSNMGI…KEGEQNQQTQ (67 aa)) is disordered. The segment covering 342-357 (TTSGSSGTNSQGQTPQ) has biased composition (low complexity). Residues 358–379 (RVSGLQGSDALNIQQNQTSGGS) show a composition bias toward polar residues. Low complexity predominate over residues 381-395 (QAGQQKEGEQNQQTQ). Phosphothreonine; by MAPK1 and MAPK3 is present on T453. Positions 462 to 470 (VSWQTLQLQ) match the 9aaTAD motif. O-linked (GlcNAc) serine glycosylation occurs at S491. The segment at 496–610 (SSSNTTLTPI…REACTCPYCK (115 aa)) is transactivation domain C (highly charged). The interval 567 to 598 (LHGAGGDGIHDDTAGGEEGENSPDAQPQAGRR) is disordered. S612 bears the Phosphoserine; alternate mark. Residue S612 is glycosylated (O-linked (GlcNAc) serine; alternate). Residues 619–785 (DPGKKKQHIC…QSINISGNGF (167 aa)) are VZV IE62-binding. The segment at 626-650 (HICHIQGCGKVYGKTSHLRAHLRWH) adopts a C2H2-type 1 zinc-finger fold. T640 carries the post-translational modification Phosphothreonine; alternate. T640 is a glycosylation site (O-linked (GlcNAc) threonine; alternate). S641 carries an O-linked (GlcNAc) serine; alternate glycan. Phosphoserine; by PKC/PRKCZ; alternate is present on S641. The residue at position 651 (T651) is a Phosphothreonine; by PKC/PRKCZ. The C2H2-type 2 zinc-finger motif lies at 656–680 (FMCTWSYCGKRFTRSDELQRHKRTH). T668 bears the Phosphothreonine mark. The residue at position 670 (S670) is a Phosphoserine; by PKC/PRKCZ. T681 carries the phosphothreonine; by PKC/PRKCZ modification. Residues 686-708 (FACPECPKRFMRSDHLSKHIKTH) form a C2H2-type 3 zinc finger. Phosphoserine; alternate is present on residues S698 and S702. 2 O-linked (GlcNAc) serine; alternate glycosylation sites follow: S698 and S702. K703 carries the N6-acetyllysine modification. The segment at 708–785 (HQNKKGGPGV…QSINISGNGF (78 aa)) is domain D. A Phosphothreonine; by MAPK1, MAPK3 and MAPK8 modification is found at T739.

Belongs to the Sp1 C2H2-type zinc-finger protein family. Interacts with ATF7IP, ATF7IP2, BAHD1, POGZ, HCFC1, AATF and PHC2. Interacts with HLTF; the interaction may be required for basal transcriptional activity of HLTF. Interacts (deacetylated form) with EP300; the interaction enhances gene expression. Interacts with HDAC1 and JUN. Interacts with ELF1; the interaction is inhibited by glycosylation of SP1. Interaction with NFYA; the interaction is inhibited by glycosylation of SP1. Interacts with ATF7IP and TBP. Interacts with MEIS2 isoform 4 and PBX1 isoform PBX1a. Interacts with EGR1. Interacts with SMARCA4/BRG1. Interacts with RNF112 in an oxidative stress-regulated manner. Interacts with ZBTB7A; ZBTB7A prevents the binding to GC-rich motifs in promoters and represses the transcriptional activity of SP1. Interacts with DDX3X; this interaction potentiates SP1-induced CDKN1A/WAF1/CIP1 transcription. Interacts with MSX1; the interaction may inhibit MSX1 autoinactivation. In terms of assembly, (Microbial infection) Interacts with varicella-zoster virus IE62 protein. As to quaternary structure, (Microbial infection) Interacts with SV40 VP2/3 proteins. Interacts with SV40 major capsid protein VP1; this interaction leads to a cooperativity between the 2 proteins in DNA binding. (Microbial infection) Interacts with HIV-1 Vpr; the interaction is inhibited by SP1 O-glycosylation. In terms of processing, phosphorylated on multiple serine and threonine residues. Phosphorylation is coupled to ubiquitination, sumoylation and proteolytic processing. Phosphorylation on Ser-59 enhances proteolytic cleavage. Phosphorylation on Ser-7 enhances ubiquitination and protein degradation. Hyperphosphorylation on Ser-101 in response to DNA damage has no effect on transcriptional activity. MAPK1/MAPK3-mediated phosphorylation on Thr-453 and Thr-739 enhances VEGF transcription but, represses FGF2-triggered PDGFR-alpha transcription. Also implicated in the repression of RECK by ERBB2. Hyperphosphorylated on Thr-278 and Thr-739 during mitosis by MAPK8 shielding SP1 from degradation by the ubiquitin-dependent pathway. Phosphorylated in the zinc-finger domain by calmodulin-activated PKCzeta. Phosphorylation on Ser-641 by PKCzeta is critical for TSA-activated LHR gene expression through release of its repressor, p107. Phosphorylation on Thr-668, Ser-670 and Thr-681 is stimulated by angiotensin II via the AT1 receptor inducing increased binding to the PDGF-D promoter. This phosphorylation is increased in injured artey wall. Ser-59 and Thr-681 can both be dephosphorylated by PP2A during cell-cycle interphase. Dephosphorylation on Ser-59 leads to increased chromatin association during interphase and increases the transcriptional activity. On insulin stimulation, sequentially glycosylated and phosphorylated on several C-terminal serine and threonine residues. Acetylated. Acetylation/deacetylation events affect transcriptional activity. Deacetylation leads to an increase in the expression of the 12(s)-lipooxygenase gene through recruitment of p300 to the promoter. Deacetylated by HDAC6 which leads to increased expression of ENG and positive regulation of angiogenesis. Post-translationally, ubiquitinated. Ubiquitination occurs on the C-terminal proteolytically-cleaved peptide and is triggered by phosphorylation. In terms of processing, sumoylated with SUMO1. Sumoylation modulates proteolytic cleavage of the N-terminal repressor domain. Sumoylation levels are attenuated during tumorigenesis. Phosphorylation mediates SP1 desumoylation. Proteolytic cleavage in the N-terminal repressor domain is prevented by sumoylation. The C-terminal cleaved product is susceptible to degradation. Post-translationally, O-glycosylated; Contains 8 N-acetylglucosamine side chains. Levels are controlled by insulin and the SP1 phosphorylation states. Insulin-mediated O-glycosylation locates SP1 to the nucleus, where it is sequentially deglycosylated and phosphorylated. O-glycosylation affects transcriptional activity through disrupting the interaction with a number of transcription factors including ELF1 and NFYA. Also inhibits interaction with the HIV1 promoter. Inhibited by peroxisomome proliferator receptor gamma (PPARgamma). Up-regulated in adenocarcinomas of the stomach (at protein level). Isoform 3 is ubiquitously expressed at low levels.

It localises to the nucleus. The protein localises to the cytoplasm. In terms of biological role, transcription factor that can activate or repress transcription in response to physiological and pathological stimuli. Binds with high affinity to GC-rich motifs and regulates the expression of a large number of genes involved in a variety of processes such as cell growth, apoptosis, differentiation and immune responses. Highly regulated by post-translational modifications (phosphorylations, sumoylation, proteolytic cleavage, glycosylation and acetylation). Also binds the PDGFR-alpha G-box promoter. May have a role in modulating the cellular response to DNA damage. Implicated in chromatin remodeling. Plays an essential role in the regulation of FE65 gene expression. In complex with ATF7IP, maintains telomerase activity in cancer cells by inducing TERT and TERC gene expression. Isoform 3 is a stronger activator of transcription than isoform 1. Positively regulates the transcription of the core clock component BMAL1. Plays a role in the recruitment of SMARCA4/BRG1 on the c-FOS promoter. Plays a role in protecting cells against oxidative stress following brain injury by regulating the expression of RNF112. The protein is Transcription factor Sp1 (SP1) of Homo sapiens (Human).